Consider the following 1549-residue polypeptide: Ferredoxin-dependent glutamate synthase (1549 aa).

Catalysis depends on C37, which acts as the For GATase activity. Residues 37-435 (CGVGFIAHLD…PGEMIVLDLQ (399 aa)) enclose the Glutamine amidotransferase type-2 domain. 1116–1173 (LHEVHCLLVENNLREKVILRVDGGLRTGQDVVMAALLGADEYGFGTIAMIAGGCIMAR) serves as a coordination point for FMN. [3Fe-4S] cluster is bound by residues C1169, C1175, and C1180.

Belongs to the glutamate synthase family. As to quaternary structure, monomer. [3Fe-4S] cluster is required as a cofactor. The cofactor is FAD. FMN serves as cofactor.

The protein resides in the plastid. The protein localises to the chloroplast stroma. The enzyme catalyses 2 oxidized [2Fe-2S]-[ferredoxin] + 2 L-glutamate = L-glutamine + 2 reduced [2Fe-2S]-[ferredoxin] + 2-oxoglutarate + 2 H(+). It participates in amino-acid biosynthesis; L-glutamate biosynthesis via GLT pathway; L-glutamate from 2-oxoglutarate and L-glutamine (ferredoxin route): step 1/1. It functions in the pathway energy metabolism; nitrogen metabolism. The protein is Ferredoxin-dependent glutamate synthase (gltB) of Cyanidium caldarium (Red alga).